The chain runs to 221 residues: Probable GTP-binding protein EngB (221 aa).

Residues 37 to 219 (QGIEIALAGR…RAAIVKLLRE (183 aa)) form the EngB-type G domain. GTP contacts are provided by residues 45–52 (GRSNVGKS), 72–76 (GRTQE), 97–100 (DMPG), 164–167 (TKTD), and 198–200 (TSS). Positions 52 and 74 each coordinate Mg(2+).

The protein belongs to the TRAFAC class TrmE-Era-EngA-EngB-Septin-like GTPase superfamily. EngB GTPase family. Mg(2+) serves as cofactor.

Functionally, necessary for normal cell division and for the maintenance of normal septation. The polypeptide is Probable GTP-binding protein EngB (Afipia carboxidovorans (strain ATCC 49405 / DSM 1227 / KCTC 32145 / OM5) (Oligotropha carboxidovorans)).